Reading from the N-terminus, the 132-residue chain is Small ribosomal subunit protein uS8 (132 aa).

The protein belongs to the universal ribosomal protein uS8 family. As to quaternary structure, part of the 30S ribosomal subunit. Contacts proteins S5 and S12.

One of the primary rRNA binding proteins, it binds directly to 16S rRNA central domain where it helps coordinate assembly of the platform of the 30S subunit. The protein is Small ribosomal subunit protein uS8 of Natranaerobius thermophilus (strain ATCC BAA-1301 / DSM 18059 / JW/NM-WN-LF).